Here is a 335-residue protein sequence, read N- to C-terminus: MDPEVFAQARLRMDQLTKPPRALGYLEEVALRLAALQGRVKPELGRGAVVVAAADHGVVAEGVSAYPQEVTRQMVLNFLRGGAAINQFALAADCAVYVLDVGVVGELPDHPGLLKRKVRPGTANLAQGPAMTPEEAERALLAGREAARRAIAEGATLLAAGDMGIGNTTAAAALTAALLGLPPEAVVGRGTGVGEEGLRRKRQAVARALARLHPGMGPLEVAAEVGGLELVAIAGIYLEGYEAGLPLVLDGFPVTAGALLAWKMAPGLRDHLFAGHLSREPGHRHQLEALGLRPLLDLDLALGEGTGAVLAMPLLRAAARILHMATFQEAGVSRG.

The active-site Proton acceptor is the Glu304.

Belongs to the CobT family.

It catalyses the reaction 5,6-dimethylbenzimidazole + nicotinate beta-D-ribonucleotide = alpha-ribazole 5'-phosphate + nicotinate + H(+). Its pathway is nucleoside biosynthesis; alpha-ribazole biosynthesis; alpha-ribazole from 5,6-dimethylbenzimidazole: step 1/2. Functionally, catalyzes the synthesis of alpha-ribazole-5'-phosphate from nicotinate mononucleotide (NAMN) and 5,6-dimethylbenzimidazole (DMB). The sequence is that of Nicotinate-nucleotide--dimethylbenzimidazole phosphoribosyltransferase from Thermus thermophilus (strain ATCC 27634 / DSM 579 / HB8).